A 373-amino-acid chain; its full sequence is Carbamoyl phosphate synthase small chain (373 aa).

The CPSase stretch occupies residues M1–P179. Positions 47, 230, and 232 each coordinate L-glutamine. Residues T182–R373 enclose the Glutamine amidotransferase type-1 domain. C258 functions as the Nucleophile in the catalytic mechanism. F259, Q262, N300, G302, and F303 together coordinate L-glutamine. Active-site residues include H348 and E350.

It belongs to the CarA family. Composed of two chains; the small (or glutamine) chain promotes the hydrolysis of glutamine to ammonia, which is used by the large (or ammonia) chain to synthesize carbamoyl phosphate. Tetramer of heterodimers (alpha,beta)4.

It catalyses the reaction hydrogencarbonate + L-glutamine + 2 ATP + H2O = carbamoyl phosphate + L-glutamate + 2 ADP + phosphate + 2 H(+). It carries out the reaction L-glutamine + H2O = L-glutamate + NH4(+). It functions in the pathway amino-acid biosynthesis; L-arginine biosynthesis; carbamoyl phosphate from bicarbonate: step 1/1. It participates in pyrimidine metabolism; UMP biosynthesis via de novo pathway; (S)-dihydroorotate from bicarbonate: step 1/3. Functionally, small subunit of the glutamine-dependent carbamoyl phosphate synthetase (CPSase). CPSase catalyzes the formation of carbamoyl phosphate from the ammonia moiety of glutamine, carbonate, and phosphate donated by ATP, constituting the first step of 2 biosynthetic pathways, one leading to arginine and/or urea and the other to pyrimidine nucleotides. The small subunit (glutamine amidotransferase) binds and cleaves glutamine to supply the large subunit with the substrate ammonia. This is Carbamoyl phosphate synthase small chain from Mycolicibacterium paratuberculosis (strain ATCC BAA-968 / K-10) (Mycobacterium paratuberculosis).